Reading from the N-terminus, the 261-residue chain is tRNA U34 carboxymethyltransferase (261 aa).

Residues K25, W39, K44, G63, 114–115 (VE), Y135, and R250 contribute to the carboxy-S-adenosyl-L-methionine site.

The protein belongs to the class I-like SAM-binding methyltransferase superfamily. CmoB family. As to quaternary structure, homotetramer.

It catalyses the reaction carboxy-S-adenosyl-L-methionine + 5-hydroxyuridine(34) in tRNA = 5-carboxymethoxyuridine(34) in tRNA + S-adenosyl-L-homocysteine + H(+). Its function is as follows. Catalyzes carboxymethyl transfer from carboxy-S-adenosyl-L-methionine (Cx-SAM) to 5-hydroxyuridine (ho5U) to form 5-carboxymethoxyuridine (cmo5U) at position 34 in tRNAs. The protein is tRNA U34 carboxymethyltransferase of Helicobacter pylori (strain J99 / ATCC 700824) (Campylobacter pylori J99).